The sequence spans 205 residues: Probable GTP-binding protein EngB (205 aa).

Residues 27–201 enclose the EngB-type G domain; that stretch reads SGIEIAFAGR…AAKLDSWFAP (175 aa). GTP contacts are provided by residues 35 to 42, 62 to 66, 80 to 83, 147 to 150, and 180 to 182; these read GRSNAGKS, GRTQL, DLPG, TKAD, and FSA. Mg(2+) contacts are provided by Ser42 and Thr64.

It belongs to the TRAFAC class TrmE-Era-EngA-EngB-Septin-like GTPase superfamily. EngB GTPase family. It depends on Mg(2+) as a cofactor.

Necessary for normal cell division and for the maintenance of normal septation. The protein is Probable GTP-binding protein EngB of Pasteurella multocida (strain Pm70).